Consider the following 223-residue polypeptide: MNILIFGPNGSGKGTQGALVKKKYDLAHIESGAIFREHIGGGTELGKQAKAFIERGDLVPDDITIPMVLETLKSKGANGWLLDGFPRNMVQAQKLWDALQAEGMKLDYVIEILLPREVAKNRIMGRRLCKNDNNHPNNIFIDAIKPNGDVCRVCGGELSARSDDQDEGAIGKRHDIYYNTVDGTLAAAYFYKDLAAKGMTKYIELDGEGAIDAIKDKLLAQLS.

Residue 10–15 (GSGKGT) coordinates ATP. The interval 30 to 59 (ESGAIFREHIGGGTELGKQAKAFIERGDLV) is NMP. AMP-binding positions include Ser-31, Arg-36, 57–59 (DLV), 84–87 (GFPR), and Gln-91. The interval 125–164 (GRRLCKNDNNHPNNIFIDAIKPNGDVCRVCGGELSARSDD) is LID. Arg-126 provides a ligand contact to ATP. 2 residues coordinate AMP: Arg-161 and Arg-173. An ATP-binding site is contributed by Gly-209.

Belongs to the adenylate kinase family. In terms of assembly, monomer.

It is found in the cytoplasm. It carries out the reaction AMP + ATP = 2 ADP. It functions in the pathway purine metabolism; AMP biosynthesis via salvage pathway; AMP from ADP: step 1/1. Catalyzes the reversible transfer of the terminal phosphate group between ATP and AMP. Plays an important role in cellular energy homeostasis and in adenine nucleotide metabolism. In Nitratidesulfovibrio vulgaris (strain ATCC 29579 / DSM 644 / CCUG 34227 / NCIMB 8303 / VKM B-1760 / Hildenborough) (Desulfovibrio vulgaris), this protein is Adenylate kinase.